The sequence spans 257 residues: MPKRNYDTAFSTPMSNVRRRLTFDTPLSLPATAGSVPASAKRRRWTNRPMWRKPRYYRLYRSPDVPRGCEGPCKVQSFEAKHDISHVGKVICVTDVTRGMGITHRVGKRFCVKSIWVTGKIWMDENIKTKNHTNTVMFKLVRDRRPFGTPQDFGQVFNMYDNEPSTATVKNDLRDRYQVVRKFQATVTGGQYASKEQAIVSKFYRVNNYVVYNHQEAAKYENHTENALLLYMACTHASNPVYATLKIRIYFYDSISN.

The short motif at 3–20 (KRNYDTAFSTPMSNVRRR) is the Bipartite nuclear localization signal element. Positions 41 to 55 (KRRRWTNRPMWRKPR) match the Nuclear localization signal motif. Residues 69–86 (CEGPCKVQSFEAKHDISH) fold into a zinc finger. Positions 102–123 (ITHRVGKRFCVKSIWVTGKIWM) match the Nuclear export signal motif. A Bipartite nuclear localization signal motif is present at residues 201-248 (SKFYRVNNYVVYNHQEAAKYENHTENALLLYMACTHASNPVYATLKIR).

It belongs to the geminiviridae capsid protein family. In terms of assembly, homomultimer. Binds to single-stranded and double-stranded viral DNA. Interacts (via nuclear localization signals) with host importin alpha-1a.

It is found in the virion. Its subcellular location is the host nucleus. In terms of biological role, encapsidates the viral DNA into characteristic twinned ('geminate') particles. Binds the genomic viral ssDNA and shuttles it into and out of the cell nucleus. The CP of bipartite geminiviruses is not required for cell-to-cell or systemic movement. In Glycine max (Soybean), this protein is Capsid protein.